A 400-amino-acid polypeptide reads, in one-letter code: Na(+)/H(+) antiporter NhaA (400 aa).

11 helical membrane passes run 10-30 (FNLE…AMII), 60-80 (AHHW…GLEL), 95-115 (IILP…VYLF), 126-146 (GWAI…SLLG), 155-175 (VFLV…IALF), 178-198 (NDLS…LYLL), 218-238 (VAVL…ALFI), 265-285 (GILP…AGFG), 295-315 (IAAG…WLIF), 334-354 (AALL…LAFA), and 364-384 (LGII…LKAT).

Belongs to the NhaA Na(+)/H(+) (TC 2.A.33) antiporter family.

Its subcellular location is the cell inner membrane. It carries out the reaction Na(+)(in) + 2 H(+)(out) = Na(+)(out) + 2 H(+)(in). Its function is as follows. Na(+)/H(+) antiporter that extrudes sodium in exchange for external protons. In Psychrobacter cryohalolentis (strain ATCC BAA-1226 / DSM 17306 / VKM B-2378 / K5), this protein is Na(+)/H(+) antiporter NhaA.